The following is a 411-amino-acid chain: ACT domain-containing protein ACR9 (411 aa).

3 consecutive ACT domains span residues 22-105, 111-194, and 243-322; these read VVTV…NVSK, LLKF…LAGP, and LLQI…VIIV.

Its function is as follows. May bind amino acids. This Arabidopsis thaliana (Mouse-ear cress) protein is ACT domain-containing protein ACR9.